A 128-amino-acid chain; its full sequence is Large ribosomal subunit protein bL20c (128 aa).

The protein belongs to the bacterial ribosomal protein bL20 family.

The protein resides in the plastid. It localises to the chloroplast. Binds directly to 23S ribosomal RNA and is necessary for the in vitro assembly process of the 50S ribosomal subunit. It is not involved in the protein synthesizing functions of that subunit. The chain is Large ribosomal subunit protein bL20c from Trachelium caeruleum (Blue throatwort).